Here is a 210-residue protein sequence, read N- to C-terminus: MGQVFLLMPVLLVSCFLSQGAAMENQRLFNIAVNRVQHLHLLAQKMFNDFEGTLLSDERRQLNKIFLLDFCNSDSIVSPIDKQETQKSSVLKLLRISFRLIESWEYPSQTLTISNSLMVRNSNQISEKLSDLKVGINLLIEGSQEGILSLDDNDSQHLPPYGNYYQNLGGDGNVRRNYELLACFKKDMHKVETYLTVAKCRKSLEANCTL.

An N-terminal signal peptide occupies residues Met-1–Ala-22. Residue His-38 participates in Zn(2+) binding. Residues Cys-71 and Cys-183 are joined by a disulfide bond. Glu-192 is a Zn(2+) binding site. The cysteines at positions 200 and 208 are disulfide-linked.

This sequence belongs to the somatotropin/prolactin family.

The protein localises to the secreted. In terms of biological role, growth hormone plays an important role in growth control and is involved in the regulation of several anabolic processes. Implicated as an osmoregulatory substance important for seawater adaptation. The sequence is that of Somatotropin-2 (gh2) from Oncorhynchus nerka (Sockeye salmon).